The sequence spans 457 residues: tRNA-2-methylthio-N(6)-dimethylallyladenosine synthase (457 aa).

Positions 3 to 120 (KKVYVKTFGC…LPQMIDKRRE (118 aa)) constitute an MTTase N-terminal domain. [4Fe-4S] cluster contacts are provided by Cys12, Cys49, Cys83, Cys157, Cys161, and Cys164. Positions 143-377 (RVDGPSAFVS…QATIEENVQR (235 aa)) constitute a Radical SAM core domain. In terms of domain architecture, TRAM spans 380-447 (DSMVGKIERI…PHSLRGELVL (68 aa)).

The protein belongs to the methylthiotransferase family. MiaB subfamily. In terms of assembly, monomer. Requires [4Fe-4S] cluster as cofactor.

The protein localises to the cytoplasm. The enzyme catalyses N(6)-dimethylallyladenosine(37) in tRNA + (sulfur carrier)-SH + AH2 + 2 S-adenosyl-L-methionine = 2-methylsulfanyl-N(6)-dimethylallyladenosine(37) in tRNA + (sulfur carrier)-H + 5'-deoxyadenosine + L-methionine + A + S-adenosyl-L-homocysteine + 2 H(+). Its function is as follows. Catalyzes the methylthiolation of N6-(dimethylallyl)adenosine (i(6)A), leading to the formation of 2-methylthio-N6-(dimethylallyl)adenosine (ms(2)i(6)A) at position 37 in tRNAs that read codons beginning with uridine. This Paraburkholderia phytofirmans (strain DSM 17436 / LMG 22146 / PsJN) (Burkholderia phytofirmans) protein is tRNA-2-methylthio-N(6)-dimethylallyladenosine synthase.